A 209-amino-acid polypeptide reads, in one-letter code: MSKVTEITHPLILHKLAFIRDKNTGSKDFRELVSEVSMLMAYEVTRNLPMEEIEIETPVCKTKCKVLAGKKVAIVPILRAGLGMVDGMLQLIPAAKVGHIGLYRDEETLQPVEYFCKLPQDIAERDVIVVDPMLATGGSAADAITLLKKRGAKQIRLMCLISSPEGIEFVQKAHPDVDIYVACIDEKLNDHGYIVPGLGDAGDRLFGTK.

Residues arginine 79, arginine 104, and 131–139 (DPMLATGGS) each bind 5-phospho-alpha-D-ribose 1-diphosphate. Uracil contacts are provided by residues isoleucine 194 and 199 to 201 (GDA). Residue aspartate 200 coordinates 5-phospho-alpha-D-ribose 1-diphosphate.

The protein belongs to the UPRTase family. Mg(2+) is required as a cofactor.

The catalysed reaction is UMP + diphosphate = 5-phospho-alpha-D-ribose 1-diphosphate + uracil. It participates in pyrimidine metabolism; UMP biosynthesis via salvage pathway; UMP from uracil: step 1/1. Allosterically activated by GTP. In terms of biological role, catalyzes the conversion of uracil and 5-phospho-alpha-D-ribose 1-diphosphate (PRPP) to UMP and diphosphate. The sequence is that of Uracil phosphoribosyltransferase from Clostridium perfringens (strain ATCC 13124 / DSM 756 / JCM 1290 / NCIMB 6125 / NCTC 8237 / Type A).